We begin with the raw amino-acid sequence, 360 residues long: Phospho-N-acetylmuramoyl-pentapeptide-transferase (360 aa).

10 consecutive transmembrane segments (helical) span residues 21–41 (YVTF…LWWG), 74–94 (MGGL…GDLG), 97–117 (YVWV…IDDY), 134–154 (YILQ…SAGS), 168–188 (VMPQ…VGSS), 199–219 (GLAI…AYLS), 236–256 (SGEL…FLWF), 263–283 (VFMG…IAVL), 288–308 (ILLV…ILQV), and 338–358 (VIVR…ATLK).

It belongs to the glycosyltransferase 4 family. MraY subfamily. Requires Mg(2+) as cofactor.

It is found in the cell inner membrane. It catalyses the reaction UDP-N-acetyl-alpha-D-muramoyl-L-alanyl-gamma-D-glutamyl-meso-2,6-diaminopimeloyl-D-alanyl-D-alanine + di-trans,octa-cis-undecaprenyl phosphate = di-trans,octa-cis-undecaprenyl diphospho-N-acetyl-alpha-D-muramoyl-L-alanyl-D-glutamyl-meso-2,6-diaminopimeloyl-D-alanyl-D-alanine + UMP. The protein operates within cell wall biogenesis; peptidoglycan biosynthesis. In terms of biological role, catalyzes the initial step of the lipid cycle reactions in the biosynthesis of the cell wall peptidoglycan: transfers peptidoglycan precursor phospho-MurNAc-pentapeptide from UDP-MurNAc-pentapeptide onto the lipid carrier undecaprenyl phosphate, yielding undecaprenyl-pyrophosphoryl-MurNAc-pentapeptide, known as lipid I. The sequence is that of Phospho-N-acetylmuramoyl-pentapeptide-transferase from Shewanella loihica (strain ATCC BAA-1088 / PV-4).